The sequence spans 285 residues: Non-homologous end joining protein Ku (285 aa).

Positions 9–176 (ISFGLVNVPV…PAEIRHLEAS (168 aa)) constitute a Ku domain. Residues 250-285 (AMTDQKKQQNTAESETEEKPTKSTLTPRGRRKVKGA) form a disordered region.

The protein belongs to the prokaryotic Ku family. Homodimer. Interacts with LigD.

Its function is as follows. With LigD forms a non-homologous end joining (NHEJ) DNA repair enzyme, which repairs dsDNA breaks with reduced fidelity. Binds linear dsDNA with 5'- and 3'- overhangs but not closed circular dsDNA nor ssDNA. Recruits and stimulates the ligase activity of LigD. The chain is Non-homologous end joining protein Ku from Desulfitobacterium hafniense (strain DSM 10664 / DCB-2).